Here is a 168-residue protein sequence, read N- to C-terminus: Phospholipase A and acyltransferase 1 (168 aa).

Over 1 to 138 (MAFNDCFSLN…GEGVSEQANR (138 aa)) the chain is Cytoplasmic. The 116-residue stretch at 20–135 (LIEVFRPGYQ…LRYGEGVSEQ (116 aa)) folds into the LRAT domain. Residue His-30 is part of the active site. Cys-119 functions as the Acyl-thioester intermediate in the catalytic mechanism. A helical transmembrane segment spans residues 139–159 (AISTVEFVTAAVGVFSFLGLF). Over 160 to 168 (PKGQRAKYY) the chain is Lumenal.

This sequence belongs to the H-rev107 family. Abundantly expressed in testis, skeletal muscle, brain, and heart. As to expression, highly expressed in the testis, skeletal muscle, brain, heart, and thyroid.

It localises to the membrane. The protein localises to the cytoplasm. It is found in the nucleus. The enzyme catalyses a 1,2-diacyl-sn-glycero-3-phosphocholine + H2O = a 1-acyl-sn-glycero-3-phosphocholine + a fatty acid + H(+). It carries out the reaction a 1,2-diacyl-sn-glycero-3-phosphocholine + H2O = a 2-acyl-sn-glycero-3-phosphocholine + a fatty acid + H(+). It catalyses the reaction 1,2-dihexadecanoyl-sn-glycero-3-phosphocholine + H2O = 2-hexadecanoyl-sn-glycero-3-phosphocholine + hexadecanoate + H(+). The catalysed reaction is 1,2-dihexadecanoyl-sn-glycero-3-phosphocholine + H2O = 1-hexadecanoyl-sn-glycero-3-phosphocholine + hexadecanoate + H(+). The enzyme catalyses 1-hexadecanoyl-2-(5Z,8Z,11Z,14Z-eicosatetraenoyl)-sn-glycero-3-phosphoethanolamine + H2O = 2-(5Z,8Z,11Z,14Z)-eicosatetraenoyl-sn-glycero-3-phosphoethanolamine + hexadecanoate + H(+). It carries out the reaction 1-hexadecanoyl-2-(5Z,8Z,11Z,14Z-eicosatetraenoyl)-sn-glycero-3-phosphoethanolamine + H2O = 1-hexadecanoyl-sn-glycero-3-phosphoethanolamine + (5Z,8Z,11Z,14Z)-eicosatetraenoate + H(+). It catalyses the reaction 1,2-di-(9Z-octadecenoyl)-sn-glycero-3-phosphoethanolamine + 1,2-dihexadecanoyl-sn-glycero-3-phosphocholine = hexadecanoyl-sn-glycero-3-phosphocholine + N-hexadecanoyl-1,2-di-(9Z-octadecenoyl)-sn-glycero-3-phosphoethanolamine + H(+). The catalysed reaction is 1,2-dihexadecanoyl-sn-glycero-3-phosphocholine + a 2-acyl-sn-glycero-3-phosphocholine = a 1-hexadecanoyl-2-acyl-sn-glycero-3-phosphocholine + 2-hexadecanoyl-sn-glycero-3-phosphocholine. Its function is as follows. Exhibits both phospholipase A1/2 and acyltransferase activities. Shows phospholipase A1 (PLA1) and A2 (PLA2) activity, catalyzing the calcium-independent release of fatty acids from the sn-1 or sn-2 position of glycerophospholipids. Shows O-acyltransferase activity, catalyzing the transfer of a fatty acyl group from glycerophospholipid to the hydroxyl group of lysophospholipid. Shows N-acyltransferase activity, catalyzing the calcium-independent transfer of a fatty acyl group at the sn-1 position of phosphatidylcholine (PC) and other glycerophospholipids to the primary amine of phosphatidylethanolamine (PE), forming N-acylphosphatidylethanolamine (NAPE) which serves as precursor for N-acylethanolamines (NAEs). The sequence is that of Phospholipase A and acyltransferase 1 from Homo sapiens (Human).